Reading from the N-terminus, the 249-residue chain is Aquaporin SIP2-1 (249 aa).

Transmembrane regions (helical) follow at residues 12-32 (PWLV…GALV) and 53-73 (VSLS…SGGA). An NPA 1 motif is present at residues 76 to 78 (NPL). The next 4 helical transmembrane spans lie at 104–124 (AQVI…PNVG), 133–155 (AHHG…VTLK), 176–196 (IHLL…AFAW), and 210–230 (LVYW…VTFF). The short motif at 189-191 (NPA) is the NPA 2 element.

It belongs to the MIP/aquaporin (TC 1.A.8) family. SIP (TC 1.A.8.10) subfamily.

The protein localises to the membrane. Aquaporins facilitate the transport of water and small neutral solutes across cell membranes. In Zea mays (Maize), this protein is Aquaporin SIP2-1 (SIP2-1).